The sequence spans 149 residues: Large ribosomal subunit protein bL9 (149 aa).

The protein belongs to the bacterial ribosomal protein bL9 family.

Its function is as follows. Binds to the 23S rRNA. The protein is Large ribosomal subunit protein bL9 of Haemophilus influenzae (strain PittEE).